The sequence spans 357 residues: mRNA export factor GLE2 (357 aa).

A disordered region spans residues 1–31 (MAGLFGTTTSTTTSTLGDLKNDVELGSPPED). 5 WD repeats span residues 28–71 (PPED…QNQG), 76–115 (EHEG…AMQV), 117–158 (AHDA…PAGT), 160–197 (QCQE…KFYK), and 256–295 (TNVH…RLKG).

Belongs to the WD repeat rae1 family. In terms of assembly, component of the nuclear pore complex (NPC). NPC constitutes the exclusive means of nucleocytoplasmic transport. NPCs allow the passive diffusion of ions and small molecules and the active, nuclear transport receptor-mediated bidirectional transport of macromolecules such as proteins, RNAs, ribonucleoparticles (RNPs), and ribosomal subunits across the nuclear envelope. Due to its 8-fold rotational symmetry, all subunits are present with 8 copies or multiples thereof.

It is found in the nucleus. It localises to the nuclear pore complex. The protein resides in the nucleus membrane. Its function is as follows. Functions as a component of the nuclear pore complex (NPC). NPC components, collectively referred to as nucleoporins (NUPs), can play the role of both NPC structural components and of docking or interaction partners for transiently associated nuclear transport factors. It is specifically important for nuclear mRNA export. The protein is mRNA export factor GLE2 (GLE2) of Chaetomium thermophilum (strain DSM 1495 / CBS 144.50 / IMI 039719) (Thermochaetoides thermophila).